The primary structure comprises 168 residues: Phosphopantetheine adenylyltransferase (168 aa).

Position 9 (Thr9) interacts with substrate. ATP is bound by residues 9–10 (TF) and His17. Substrate contacts are provided by Lys41, Leu74, and Arg88. ATP-binding positions include 89–91 (GLR), Glu99, and 124–130 (LQPIASR).

It belongs to the bacterial CoaD family. Homohexamer. Mg(2+) serves as cofactor.

It is found in the cytoplasm. The catalysed reaction is (R)-4'-phosphopantetheine + ATP + H(+) = 3'-dephospho-CoA + diphosphate. The protein operates within cofactor biosynthesis; coenzyme A biosynthesis; CoA from (R)-pantothenate: step 4/5. Functionally, reversibly transfers an adenylyl group from ATP to 4'-phosphopantetheine, yielding dephospho-CoA (dPCoA) and pyrophosphate. The polypeptide is Phosphopantetheine adenylyltransferase (Sphingopyxis alaskensis (strain DSM 13593 / LMG 18877 / RB2256) (Sphingomonas alaskensis)).